The primary structure comprises 282 residues: Phosphatidylglycerol--prolipoprotein diacylglyceryl transferase (282 aa).

The next 4 helical transmembrane spans lie at 23 to 43 (IGPLAIHWYGLAYVAGILLGW), 71 to 91 (FIVWAALGVVLGGRLGYIFFY), 106 to 126 (IWNGGMSFHGGLTGTTIAMII), and 132 to 152 (GIPIWSLFDIVATVVPFGLFF). Arg-154 provides a ligand contact to a 1,2-diacyl-sn-glycero-3-phospho-(1'-sn-glycerol). The next 3 membrane-spanning stretches (helical) occupy residues 189-209 (LYEAGLEGIVLLLVLAALVYG), 217-237 (GFITGVFVCGYALSRIFVEFF), and 252-272 (WLTMGMVLSSPMILLGLWAML).

Belongs to the Lgt family.

The protein resides in the cell inner membrane. The enzyme catalyses L-cysteinyl-[prolipoprotein] + a 1,2-diacyl-sn-glycero-3-phospho-(1'-sn-glycerol) = an S-1,2-diacyl-sn-glyceryl-L-cysteinyl-[prolipoprotein] + sn-glycerol 1-phosphate + H(+). The protein operates within protein modification; lipoprotein biosynthesis (diacylglyceryl transfer). Catalyzes the transfer of the diacylglyceryl group from phosphatidylglycerol to the sulfhydryl group of the N-terminal cysteine of a prolipoprotein, the first step in the formation of mature lipoproteins. This is Phosphatidylglycerol--prolipoprotein diacylglyceryl transferase from Rhizobium leguminosarum bv. trifolii (strain WSM2304).